The following is a 305-amino-acid chain: Oligopeptide transport system permease protein OppC (305 aa).

A run of 6 helical transmembrane segments spans residues A43–F63, I105–G125, L166–V185, L212–V232, I236–W256, and L274–G294. The ABC transmembrane type-1 domain occupies A103–G292.

The protein belongs to the binding-protein-dependent transport system permease family. OppBC subfamily. In terms of assembly, the complex is composed of two ATP-binding proteins (OppD and OppF), two transmembrane proteins (OppB and OppC) and a solute-binding protein (OppA).

The protein localises to the cell membrane. Its function is as follows. Part of the ABC transporter complex OppABCDF involved in the uptake of oligopeptides. Probably responsible for the translocation of the substrate across the membrane. Required for sporulation and genetic competence. The protein is Oligopeptide transport system permease protein OppC of Bacillus subtilis (strain 168).